The following is a 500-amino-acid chain: Probable cytosol aminopeptidase (500 aa).

Mn(2+) contacts are provided by K264 and D269. K276 is an active-site residue. Mn(2+) is bound by residues D287, D346, and E348. The active site involves R350.

Belongs to the peptidase M17 family. Mn(2+) is required as a cofactor.

It localises to the cytoplasm. It catalyses the reaction Release of an N-terminal amino acid, Xaa-|-Yaa-, in which Xaa is preferably Leu, but may be other amino acids including Pro although not Arg or Lys, and Yaa may be Pro. Amino acid amides and methyl esters are also readily hydrolyzed, but rates on arylamides are exceedingly low.. The catalysed reaction is Release of an N-terminal amino acid, preferentially leucine, but not glutamic or aspartic acids.. Functionally, presumably involved in the processing and regular turnover of intracellular proteins. Catalyzes the removal of unsubstituted N-terminal amino acids from various peptides. This is Probable cytosol aminopeptidase from Chlamydia felis (strain Fe/C-56) (Chlamydophila felis).